The following is a 395-amino-acid chain: Carbamoyl phosphate synthase small chain (395 aa).

The CPSase stretch occupies residues 1-192 (MTYNLHPAIL…LQYKTDKMYG (192 aa)). L-glutamine-binding residues include Ser-50, Gly-244, and Gly-246. The Glutamine amidotransferase type-1 domain maps to 196-383 (KIILIDFGVK…INLIKHFKQY (188 aa)). The active-site Nucleophile is the Cys-273. The L-glutamine site is built by Met-274, Gln-277, Asn-313, Gly-315, and Phe-316. Catalysis depends on residues His-356 and Glu-358.

Belongs to the CarA family. Composed of two chains; the small (or glutamine) chain promotes the hydrolysis of glutamine to ammonia, which is used by the large (or ammonia) chain to synthesize carbamoyl phosphate. Tetramer of heterodimers (alpha,beta)4.

The protein resides in the plastid. It localises to the chloroplast. The catalysed reaction is hydrogencarbonate + L-glutamine + 2 ATP + H2O = carbamoyl phosphate + L-glutamate + 2 ADP + phosphate + 2 H(+). It carries out the reaction L-glutamine + H2O = L-glutamate + NH4(+). The protein operates within amino-acid biosynthesis; L-arginine biosynthesis; carbamoyl phosphate from bicarbonate: step 1/1. It participates in pyrimidine metabolism; UMP biosynthesis via de novo pathway; (S)-dihydroorotate from bicarbonate: step 1/3. Functionally, small subunit of the glutamine-dependent carbamoyl phosphate synthetase (CPSase). CPSase catalyzes the formation of carbamoyl phosphate from the ammonia moiety of glutamine, carbonate, and phosphate donated by ATP, constituting the first step of 2 biosynthetic pathways, one leading to arginine and/or urea and the other to pyrimidine nucleotides. The small subunit (glutamine amidotransferase) binds and cleaves glutamine to supply the large subunit with the substrate ammonia. The sequence is that of Carbamoyl phosphate synthase small chain from Gracilaria tenuistipitata var. liui (Red alga).